Consider the following 431-residue polypeptide: Histidinol dehydrogenase (431 aa).

The NAD(+) site is built by Y130, Q191, and N214. The substrate site is built by S237, Q261, and H264. 2 residues coordinate Zn(2+): Q261 and H264. Active-site proton acceptor residues include E329 and H330. Residues H330, D363, E417, and H422 each contribute to the substrate site. D363 provides a ligand contact to Zn(2+). Position 422 (H422) interacts with Zn(2+).

It belongs to the histidinol dehydrogenase family. Requires Zn(2+) as cofactor.

It carries out the reaction L-histidinol + 2 NAD(+) + H2O = L-histidine + 2 NADH + 3 H(+). The protein operates within amino-acid biosynthesis; L-histidine biosynthesis; L-histidine from 5-phospho-alpha-D-ribose 1-diphosphate: step 9/9. Catalyzes the sequential NAD-dependent oxidations of L-histidinol to L-histidinaldehyde and then to L-histidine. The protein is Histidinol dehydrogenase of Psychrobacter arcticus (strain DSM 17307 / VKM B-2377 / 273-4).